A 1117-amino-acid chain; its full sequence is Reverse gyrase (1117 aa).

The RG N-terminal-type zinc finger occupies 3–42; sequence LATGAKYYHSCINCGGINTDTRNEKGLPCEVCLPFEDGDV. Zn(2+)-binding residues include Cys-13, Cys-16, Cys-31, and Cys-34. ATP-binding positions include Gln-84 and 101–108; that span reads APTGVGKT. The region spanning 88-284 is the Helicase ATP-binding domain; the sequence is AKRLLLSKSF…LFRELLGFEI (197 aa). Residues 206–209 carry the DEAD box motif; the sequence is DDVD. Residues 551–1117 are topoisomerase I; sequence KDMKSRMIIV…EELNEILIKN (567 aa). A Toprim domain is found at 555–712; the sequence is SRMIIVESPT…NVQRIEMHEI (158 aa). Position 561 (Glu-561) interacts with Mg(2+). Residues 631–658 form an RG C-terminal-type zinc finger; that stretch reads IKRCSSCGAQFTDELPRCPYCNSDKIDD. Zn(2+) contacts are provided by Cys-634, Cys-637, Cys-648, and Cys-651. Asp-681 is a binding site for Mg(2+). The Topo IA-type catalytic domain occupies 728–1114; that stretch reads DVNLVKSQIV…NLYEELNEIL (387 aa). The O-(5'-phospho-DNA)-tyrosine intermediate role is filled by Tyr-864.

It in the N-terminal section; belongs to the DEAD box helicase family. DDVD subfamily. In the C-terminal section; belongs to the type IA topoisomerase family. As to quaternary structure, monomer. It depends on Zn(2+) as a cofactor. Requires Mg(2+) as cofactor.

Its subcellular location is the cytoplasm. The catalysed reaction is ATP + H2O = ADP + phosphate + H(+). In terms of biological role, modifies the topological state of DNA by introducing positive supercoils in an ATP-dependent process, increasing the linking number in steps of +1; also positively supercoils with dATP and ATP-gamma-S. With UTP or dTTP relaxes negatively supercoiled DNA, in the absence of any nucleotide partially relaxes negative supercoils. In the absence of nucleotide has a higher affinity for dsDNA with a single-stranded tail than dsDNA or ssDNA. Has an ATPase activity in the absence of DNA. Binds to single-stranded DNA, transiently cleaves and then rejoins the ends, introducing a positive supercoil in the process. The scissile phosphodiester is attacked by the catalytic tyrosine of the enzyme, resulting in the formation of a DNA-(5'-phosphotyrosyl)-enzyme intermediate. Probably involved in rewinding DNA strands in regions of the chromosome that have opened up to allow replication, transcription, DNA repair and/or for DNA protection. This Caldanaerobacter subterraneus subsp. tengcongensis (strain DSM 15242 / JCM 11007 / NBRC 100824 / MB4) (Thermoanaerobacter tengcongensis) protein is Reverse gyrase.